A 162-amino-acid polypeptide reads, in one-letter code: Probable chemoreceptor glutamine deamidase CheD (162 aa).

The protein belongs to the CheD family.

It carries out the reaction L-glutaminyl-[protein] + H2O = L-glutamyl-[protein] + NH4(+). Functionally, probably deamidates glutamine residues to glutamate on methyl-accepting chemotaxis receptors (MCPs), playing an important role in chemotaxis. In Syntrophotalea carbinolica (strain DSM 2380 / NBRC 103641 / GraBd1) (Pelobacter carbinolicus), this protein is Probable chemoreceptor glutamine deamidase CheD.